The sequence spans 237 residues: LexA repressor (237 aa).

The H-T-H motif DNA-binding region spans 26–46 (FDEMKDALDLRSKSGIHRLIT). Residues S158 and K196 each act as for autocatalytic cleavage activity in the active site.

Belongs to the peptidase S24 family. As to quaternary structure, homodimer.

It carries out the reaction Hydrolysis of Ala-|-Gly bond in repressor LexA.. Represses a number of genes involved in the response to DNA damage (SOS response), including recA and lexA. In the presence of single-stranded DNA, RecA interacts with LexA causing an autocatalytic cleavage which disrupts the DNA-binding part of LexA, leading to derepression of the SOS regulon and eventually DNA repair. This chain is LexA repressor, found in Rhodopseudomonas palustris (strain BisB18).